Consider the following 282-residue polypeptide: DegV domain-containing protein SpyM3_0586 (282 aa).

Positions 3–280 constitute a DegV domain; that stretch reads LAVITDSTAT…EGAIAFGVTP (278 aa). Positions 61 and 94 each coordinate hexadecanoate.

Functionally, may bind long-chain fatty acids, such as palmitate, and may play a role in lipid transport or fatty acid metabolism. This Streptococcus pyogenes serotype M3 (strain ATCC BAA-595 / MGAS315) protein is DegV domain-containing protein SpyM3_0586.